The following is a 56-amino-acid chain: Ovomucoid (56 aa).

The region spanning 6–56 (VDCSDHPKPACLQEQKPLCGSDNKTYDNKCSFCNAVVDSNGTLTLSHFGKC) is the Kazal-like domain. Intrachain disulfides connect C8-C38, C16-C35, and C24-C56. N45 carries N-linked (GlcNAc...) asparagine glycosylation.

It localises to the secreted. This chain is Ovomucoid, found in Pipile pipile (Trinidad piping guan).